The sequence spans 303 residues: MYYGFDIGGTKIALGVFDSGRQLQWEKRVPTPRDSYDAFLDAVCELVAEADQRFGCKGSVGIGIPGMPETEDGTLYAANVPAASGKPLRADLSARLDRDVRLDNDANCFALSEAWDDEFTQYPLVMGLILGTGVGGGLIFNGKPITGKSYITGEFGHMRLPVDALTMMGLDFPLRRCGCGQHGCIENYLSGRGFAWLYQHYYHQPLPAPEIIALYDQGDEQARAHVERYLDLLAVCLGNILTIVDPDLVVIGGGLSNFPAITTQLADRLPRHLLPVARVPRIERARHGDAGGMRGAAFLHLTD.

Residues 4-11 and 133-140 each bind ATP; these read GFDIGGTK and GVGGGLIF. Zn(2+)-binding residues include histidine 157, cysteine 177, cysteine 179, and cysteine 184.

Belongs to the ROK (NagC/XylR) family. NagK subfamily.

The catalysed reaction is N-acetyl-D-glucosamine + ATP = N-acetyl-D-glucosamine 6-phosphate + ADP + H(+). It participates in cell wall biogenesis; peptidoglycan recycling. Its function is as follows. Catalyzes the phosphorylation of N-acetyl-D-glucosamine (GlcNAc) derived from cell-wall degradation, yielding GlcNAc-6-P. This Escherichia coli O157:H7 protein is N-acetyl-D-glucosamine kinase.